The primary structure comprises 181 residues: Protein Syd (181 aa).

This sequence belongs to the Syd family.

The protein localises to the cell inner membrane. Interacts with the SecY protein in vivo. May bind preferentially to an uncomplexed state of SecY, thus functioning either as a chelating agent for excess SecY in the cell or as a regulatory factor that negatively controls the translocase function. The protein is Protein Syd of Cronobacter sakazakii (strain ATCC BAA-894) (Enterobacter sakazakii).